A 396-amino-acid chain; its full sequence is Elongation factor Tu (396 aa).

Residues 10 to 206 (KPHVNVGTIG…ALDTYIPTPE (197 aa)) enclose the tr-type G domain. Positions 19–26 (GHVDHGKT) are G1. 19–26 (GHVDHGKT) contacts GTP. Mg(2+) is bound at residue Thr-26. Positions 60-64 (GITIN) are G2. Residues 81-84 (DCPG) are G3. GTP-binding positions include 81-85 (DCPGH) and 136-139 (NKCD). Residues 136–139 (NKCD) are G4. The tract at residues 174–176 (SAK) is G5.

Belongs to the TRAFAC class translation factor GTPase superfamily. Classic translation factor GTPase family. EF-Tu/EF-1A subfamily. In terms of assembly, monomer.

The protein localises to the cytoplasm. It catalyses the reaction GTP + H2O = GDP + phosphate + H(+). Functionally, GTP hydrolase that promotes the GTP-dependent binding of aminoacyl-tRNA to the A-site of ribosomes during protein biosynthesis. The chain is Elongation factor Tu from Burkholderia vietnamiensis (strain G4 / LMG 22486) (Burkholderia cepacia (strain R1808)).